Here is a 312-residue protein sequence, read N- to C-terminus: D-alanine--D-alanine ligase (312 aa).

The ATP-grasp domain maps to 102-307 (KKIFKMEGIP…FPELTDRLIK (206 aa)). 136–191 (IKEVGVPAVVKANTQGSTIGITFVHVKEKMAEAIESALKYDQDVLVEQFVAGTEVT) provides a ligand contact to ATP. Mg(2+)-binding residues include aspartate 262, glutamate 274, and asparagine 276.

The protein belongs to the D-alanine--D-alanine ligase family. Mg(2+) is required as a cofactor. Requires Mn(2+) as cofactor.

It is found in the cytoplasm. The catalysed reaction is 2 D-alanine + ATP = D-alanyl-D-alanine + ADP + phosphate + H(+). Its pathway is cell wall biogenesis; peptidoglycan biosynthesis. Functionally, cell wall formation. The polypeptide is D-alanine--D-alanine ligase (Desulforamulus reducens (strain ATCC BAA-1160 / DSM 100696 / MI-1) (Desulfotomaculum reducens)).